We begin with the raw amino-acid sequence, 63 residues long: MSLVYMYMYIGVVMSARIQESTNDILKPITCNTNADCAKFCKGPIHNCVYHTCQCVPGNPHCC.

The first 15 residues, 1-15, serve as a signal peptide directing secretion; that stretch reads MSLVYMYMYIGVVMS. 3 disulfides stabilise this stretch: Cys-31-Cys-48, Cys-37-Cys-53, and Cys-41-Cys-55.

The protein belongs to the DEFL family.

It localises to the secreted. This Arabidopsis thaliana (Mouse-ear cress) protein is Defensin-like protein 278.